Here is a 427-residue protein sequence, read N- to C-terminus: Imidazolonepropionase (427 aa).

H81 and H83 together coordinate Fe(3+). Positions 81 and 83 each coordinate Zn(2+). 4-imidazolone-5-propanoate contacts are provided by R90, Y153, and H186. Y153 provides a ligand contact to N-formimidoyl-L-glutamate. Fe(3+) is bound at residue H260. H260 lines the Zn(2+) pocket. Residue E263 participates in 4-imidazolone-5-propanoate binding. Fe(3+) is bound at residue D335. D335 lines the Zn(2+) pocket. The N-formimidoyl-L-glutamate site is built by N337 and G339. S340 contacts 4-imidazolone-5-propanoate.

Belongs to the metallo-dependent hydrolases superfamily. HutI family. Zn(2+) is required as a cofactor. Requires Fe(3+) as cofactor.

The protein localises to the cytoplasm. It carries out the reaction 4-imidazolone-5-propanoate + H2O = N-formimidoyl-L-glutamate. It functions in the pathway amino-acid degradation; L-histidine degradation into L-glutamate; N-formimidoyl-L-glutamate from L-histidine: step 3/3. In terms of biological role, catalyzes the hydrolytic cleavage of the carbon-nitrogen bond in imidazolone-5-propanoate to yield N-formimidoyl-L-glutamate. It is the third step in the universal histidine degradation pathway. This is Imidazolonepropionase from Chloroflexus aggregans (strain MD-66 / DSM 9485).